The following is a 536-amino-acid chain: Cytochrome c oxidase subunit 1 (536 aa).

Residues 19–39 (IGMTYLGFGMLSAMMGTGMSV) form a helical membrane-spanning segment. A Ca(2+)-binding site is contributed by Glu-44. His-67 provides a ligand contact to Fe(II)-heme a. 6 helical membrane passes run 69-89 (LLMM…NFFL), 103-123 (LNNI…CSVL), 152-172 (AMFA…NFMV), 188-208 (PLFA…LPVL), 240-260 (LFWF…FGVM), and 273-293 (FGEM…FLVW). Position 246 (His-246) interacts with Cu cation. The 1'-histidyl-3'-tyrosine (His-Tyr) cross-link spans 246 to 250 (HPEVY). Tyr-250 contacts O2. His-295 and His-296 together coordinate Cu cation. 2 consecutive transmembrane segments (helical) span residues 315–335 (MVIA…IYGG) and 341–361 (VPML…LTGV). 2 residues coordinate Mg(2+): His-373 and Asp-374. A heme a3-binding site is contributed by His-381. Fe(II)-heme a is bound at residue His-383. The next 2 membrane-spanning stretches (helical) occupy residues 388-408 (MGAL…MFGL) and 418-438 (HFWL…FLGL). Pro-446 lines the Ca(2+) pocket. A helical membrane pass occupies residues 461-481 (MGSAMSVMSVLVGLKSVLVQL).

This sequence belongs to the heme-copper respiratory oxidase family. As to quaternary structure, component of the cytochrome c oxidase (complex IV, CIV), a multisubunit enzyme composed of a catalytic core of 3 subunits and several supernumerary subunits. The complex exists as a monomer or a dimer and forms supercomplexes (SCs) in the inner mitochondrial membrane with ubiquinol-cytochrome c oxidoreductase (cytochrome b-c1 complex, complex III, CIII). Heme serves as cofactor. Cu cation is required as a cofactor.

The protein localises to the mitochondrion inner membrane. It carries out the reaction 4 Fe(II)-[cytochrome c] + O2 + 8 H(+)(in) = 4 Fe(III)-[cytochrome c] + 2 H2O + 4 H(+)(out). The protein operates within energy metabolism; oxidative phosphorylation. Its function is as follows. Component of the cytochrome c oxidase, the last enzyme in the mitochondrial electron transport chain which drives oxidative phosphorylation. The respiratory chain contains 3 multisubunit complexes succinate dehydrogenase (complex II, CII), ubiquinol-cytochrome c oxidoreductase (cytochrome b-c1 complex, complex III, CIII) and cytochrome c oxidase (complex IV, CIV), that cooperate to transfer electrons derived from NADH and succinate to molecular oxygen, creating an electrochemical gradient over the inner membrane that drives transmembrane transport and the ATP synthase. Cytochrome c oxidase is the component of the respiratory chain that catalyzes the reduction of oxygen to water. Electrons originating from reduced cytochrome c in the intermembrane space (IMS) are transferred via the dinuclear copper A center (CU(A)) of subunit 2 and heme A of subunit 1 to the active site in subunit 1, a binuclear center (BNC) formed by heme A3 and copper B (CU(B)). The BNC reduces molecular oxygen to 2 water molecules using 4 electrons from cytochrome c in the IMS and 4 protons from the mitochondrial matrix. This Debaryomyces hansenii (strain ATCC 36239 / CBS 767 / BCRC 21394 / JCM 1990 / NBRC 0083 / IGC 2968) (Yeast) protein is Cytochrome c oxidase subunit 1 (COX1).